We begin with the raw amino-acid sequence, 352 residues long: NAD(P)H pyrophosphatase NUDT13, mitochondrial (352 aa).

The transit peptide at methionine 1 to leucine 20 directs the protein to the mitochondrion. Positions proline 196–phenylalanine 323 constitute a Nudix hydrolase domain. The short motif at arginine 216–glutamate 240 is the Nudix box element.

Belongs to the Nudix hydrolase family. Mg(2+) serves as cofactor. The cofactor is Mn(2+). As to expression, highly expressed in metastasis-suppressed chromosome 6 melanoma hybrids.

The protein localises to the mitochondrion. The enzyme catalyses NADH + H2O = reduced beta-nicotinamide D-ribonucleotide + AMP + 2 H(+). It catalyses the reaction NAD(+) + H2O = beta-nicotinamide D-ribonucleotide + AMP + 2 H(+). It carries out the reaction NADPH + H2O = reduced beta-nicotinamide D-ribonucleotide + adenosine 2',5'-bisphosphate + 2 H(+). Functionally, NAD(P)H pyrophosphatase that hydrolyzes NADH into NMNH and AMP, and NADPH into NMNH and 2',5'-ADP. Has a marked preference for the reduced pyridine nucleotides. Does not show activity toward NAD-capped RNAs; the NAD-cap is an atypical cap present at the 5'-end of some RNAs. This Homo sapiens (Human) protein is NAD(P)H pyrophosphatase NUDT13, mitochondrial.